Reading from the N-terminus, the 316-residue chain is NADH-cytochrome b5 reductase-like (316 aa).

An Oxidoreductase-like domain is found at 17–53; it reads KPVEPLPSQCCGSGCSPCVFDLYYRDLERWETARARN. The 103-residue stretch at 76–178 folds into the FAD-binding FR-type domain; sequence ETFLAFHIST…RGPFGSFLYE (103 aa). FAD-binding positions include 158-173 and 183-215; these read ESWR…GPFG and GELL…TFVT.

The protein belongs to the flavoprotein pyridine nucleotide cytochrome reductase family. Requires FAD as cofactor.

It catalyses the reaction 2 Fe(III)-[cytochrome b5] + NADH = 2 Fe(II)-[cytochrome b5] + NAD(+) + H(+). In terms of biological role, NADH-cytochrome b5 reductases are involved in desaturation and elongation of fatty acids, cholesterol biosynthesis, drug metabolism, and, in erythrocyte, methemoglobin reduction. This is NADH-cytochrome b5 reductase-like (Cyb5rl) from Mus musculus (Mouse).